Here is a 976-residue protein sequence, read N- to C-terminus: Chloride channel protein 1 (976 aa).

Residues 1 to 118 lie on the Cytoplasmic side of the membrane; that stretch reads MQPSQSLRRG…VVRRKLGEDW (118 aa). The tract at residues 71–92 is disordered; the sequence is DKEQDTGMSKKMGSSESMDSKD. The span at 77–87 shows a compositional bias: low complexity; sequence GMSKKMGSSES. A helical transmembrane segment spans residues 119-150; that stretch reads IFLVLLGLLMALVSWSMDYVSAKSLQAYKWSY. At 151 to 158 the chain is on the extracellular side; sequence YQMQPNLP. Residues 159 to 179 traverse the membrane as a helical segment; the sequence is LQYLVWVTFPLTLILFSAVFC. Topologically, residues 180–183 are cytoplasmic; it reads HLIS. An intramembrane region (note=Loop between two helices) is located at residues 184–189; it reads PQAVGS. The Selectivity filter part_1 signature appears at 188–192; the sequence is GSGIP. Serine 189 contacts chloride. The helical intramembrane region spans 190-195; the sequence is GIPEMK. The Cytoplasmic portion of the chain corresponds to 196–208; it reads TILRGVILKEYLT. An intramembrane region (helical) is located at residues 209–224; it reads LKAFVAKVVALTAGLG. Residues 225 to 230 constitute an intramembrane region (note=Loop between two helices); sequence SGIPVG. Residues 230–234 carry the Selectivity filter part_2 motif; sequence GKEGP. The helical intramembrane region spans 231–246; that stretch reads KEGPFVHIASICAAVL. At 247–268 the chain is on the cytoplasmic side; that stretch reads SKFMSMFCGVYEQPYYYTDMLT. 2 intramembrane regions (helical) span residues 269–280 and 281–290; these read VGCAVGVGCCFG and TPLGGVLFSI. Topologically, residues 291–301 are cytoplasmic; it reads EVTSTYFAVRN. Residues 302 to 321 traverse the membrane as a helical segment; that stretch reads YWRGFFAATFSAFVFRVLAV. The Extracellular portion of the chain corresponds to 322–347; sequence WNKDAVTITALFRTNFRMDFPFDLQE. Residues 348–376 traverse the membrane as a helical segment; it reads LPAFAIIGICCGFLGAVFVYLHRQVMLGV. Residues 377-390 are Cytoplasmic-facing; the sequence is RKHKALSQFLAKHR. Residues 391-408 traverse the membrane as a helical segment; it reads LLYPGIVTFIIASFTFPP. The Extracellular segment spans residues 409–414; the sequence is GIGQFM. The segment at residues 415–418 is an intramembrane region (note=Loop between two helices); that stretch reads AGEL. The helical intramembrane region spans 419 to 426; the sequence is MPREAIST. At 427–457 the chain is on the extracellular side; it reads LFDNNTWVKHVGDPESLGRSAVWIHPRVNVI. The helical intramembrane region spans 458-475; it reads IIIFLFFIMKFWMSIVAT. Residues 476–482 constitute an intramembrane region (note=Loop between two helices); that stretch reads TMPIPCG. Residues 482-486 carry the Selectivity filter part_3 motif; that stretch reads GGFMP. The segment at residues 483 to 498 is an intramembrane region (helical); it reads GFMPVFVLGAAFGRLV. Phenylalanine 484 is a binding site for chloride. Residues 499 to 521 lie on the Extracellular side of the membrane; that stretch reads GEIMAMLFPDGILFDDIIYKILP. Positions 522 to 538 form an intramembrane region, helical; the sequence is GGYAVIGAAALTGAVSH. The segment at residues 539 to 540 is an intramembrane region (note=Loop between two helices); it reads TV. Residues 541–554 constitute an intramembrane region (helical); the sequence is STAVICFELTGQIA. Over 555-557 the chain is Extracellular; it reads HIL. The helical intramembrane region spans 558–571; it reads PMMVAVILANMVAQ. The note=Loop between two helices intramembrane region spans 572–575; that stretch reads SLQP. The helical intramembrane region spans 576-578; that stretch reads SLY. Tyrosine 578 is a binding site for chloride. Residues 579–976 lie on the Cytoplasmic side of the membrane; the sequence is DSIIQVKKLP…DEEDEDELIL (398 aa). In terms of domain architecture, CBS 1 spans 609 to 668; that stretch reads MVRDVKFVSATCTYGELRTLLQTTTVKTLPLVDSKDSMILLGSVERSELQSLLQRHLGPE. A disordered region spans residues 707–759; it reads DEDEDEDLSGKPELPPLPPPHPLPSAPLSSEESNGPLPSHKQQPEAPEPADQR. Residues 719–731 show a composition bias toward pro residues; that stretch reads ELPPLPPPHPLPS. One can recognise a CBS 2 domain in the interval 816–871; it reads IDQSPFQLVEQTSLHKTHTLFSLLGLHLAYVTSMGKLRGVLALEELQKAIEGHTKS. A disordered region spans residues 872–976; it reads GVQLRPPLAS…DEEDEDELIL (105 aa). Phosphoserine is present on serine 881. Over residues 914–925 the composition is skewed to pro residues; that stretch reads SPEPPAPSPSPA. 2 stretches are compositionally biased toward acidic residues: residues 938–955 and 967–976; these read ELEELELGESPGLEEELA and DEEDEDELIL.

The protein belongs to the chloride channel (TC 2.A.49) family. ClC-1/CLCN1 subfamily. In terms of assembly, homodimer.

The protein localises to the cell membrane. Its subcellular location is the sarcolemma. It localises to the T-tubule. The catalysed reaction is chloride(in) = chloride(out). The enzyme catalyses thiocyanate(in) = thiocyanate(out). It carries out the reaction bromide(in) = bromide(out). It catalyses the reaction nitrate(in) = nitrate(out). The catalysed reaction is iodide(out) = iodide(in). With respect to regulation, modulated by membrane voltage with depolarization favouring channel opening and hyperpolarization favouring channel closure. Inhibited by acidic pH and ATP binding due to a shift of voltage dependence of common gating to more positive voltages. Inhibited by 9-anthracene-carboxylic. Voltage-gated chloride channel involved in skeletal muscle excitability. Generates most of the plasma membrane chloride conductance in skeletal muscle fibers, stabilizes the resting membrane potential and contributes to the repolarization phase during action potential firing. Forms a homodimeric channel where each subunit has its own ion conduction pathway. Conducts double-barreled currents controlled by two types of gates, two fast glutamate gates that control each subunit independently and a slow common gate that opens and shuts off both subunits simultaneously. Has a significant open probability at muscle resting potential and is further activated upon membrane depolarization. Permeable to small monovalent anions with ion selectivity for chloride &gt; thiocyanate &gt; bromide &gt; nitrate &gt; iodide. The polypeptide is Chloride channel protein 1 (CLCN1) (Canis lupus familiaris (Dog)).